An 801-amino-acid polypeptide reads, in one-letter code: Growth-differentiation transition protein 7 (801 aa).

Positions 1-22 (MIKTILIKLILLVIFCYHFLFA) are cleaved as a signal peptide.

Belongs to the GDT family.

It localises to the secreted. In Dictyostelium discoideum (Social amoeba), this protein is Growth-differentiation transition protein 7 (gdt7).